Reading from the N-terminus, the 252-residue chain is 5'-nucleotidase SurE (252 aa).

Positions 8, 9, 39, and 91 each coordinate a divalent metal cation.

The protein belongs to the SurE nucleotidase family. The cofactor is a divalent metal cation.

The protein resides in the cytoplasm. It catalyses the reaction a ribonucleoside 5'-phosphate + H2O = a ribonucleoside + phosphate. In terms of biological role, nucleotidase that shows phosphatase activity on nucleoside 5'-monophosphates. The polypeptide is 5'-nucleotidase SurE (Variovorax paradoxus (strain S110)).